The sequence spans 522 residues: Tryptophan 2-halogenase (522 aa).

Ala17, Glu36, Arg42, His44, Ile45, Ser48, Arg103, Ile127, and Asp296 together coordinate FAD. Chloride is bound by residues Ser307 and Gly308. Val309 is an FAD binding site.

Belongs to the flavin-dependent halogenase family.

Functionally, involved in the incorporation of a chlorinated tryptophan residue into halogenated forms of the secondary metabolites called chondramides. This is Tryptophan 2-halogenase from Chondromyces crocatus.